A 106-amino-acid chain; its full sequence is Tapetal oleosin GRP-19 (106 aa).

3 helical membrane passes run 14–34 (ALALLTFAGITLGGSVVACII), 37–57 (PLFVIFSPVLVPATIATTLLA), and 58–78 (SGFTASGSFGATAFTILSWLY). Positions 84–106 (RDLPKIPGLTPPAPASNPAGSGV) are disordered.

The protein belongs to the oleosin family. Proteolytically cleaved following anther tapetal breakdown. Present in pollen (at protein level). Inflorescence-specific expression, especially in flowers florets.

It is found in the secreted. The protein localises to the extracellular space. Its subcellular location is the extracellular matrix. It localises to the pollen coat. The protein resides in the lipid droplet. It is found in the membrane. Functionally, lipid-binding oleosin involved in anther tapetum development, especially for the physiology of tapetosomes. Also implicated in the formation of pollen coat. This Arabidopsis thaliana (Mouse-ear cress) protein is Tapetal oleosin GRP-19.